The sequence spans 339 residues: Phenylalanine--tRNA ligase alpha subunit (339 aa).

E254 is a binding site for Mg(2+).

Belongs to the class-II aminoacyl-tRNA synthetase family. Phe-tRNA synthetase alpha subunit type 1 subfamily. Tetramer of two alpha and two beta subunits. Requires Mg(2+) as cofactor.

The protein localises to the cytoplasm. The catalysed reaction is tRNA(Phe) + L-phenylalanine + ATP = L-phenylalanyl-tRNA(Phe) + AMP + diphosphate + H(+). The polypeptide is Phenylalanine--tRNA ligase alpha subunit (Dictyoglomus turgidum (strain DSM 6724 / Z-1310)).